Reading from the N-terminus, the 83-residue chain is MKLLLLLIITASMLIEGLVNADVYIRRHDGCKISCTVNDKYCDNECKSEGGSYGYCYAFGCWCEGLPNDKAWKSETNTCGGKK.

The signal sequence occupies residues 1–21 (MKLLLLLIITASMLIEGLVNA). Residues 22–80 (DVYIRRHDGCKISCTVNDKYCDNECKSEGGSYGYCYAFGCWCEGLPNDKAWKSETNTCG) form the LCN-type CS-alpha/beta domain. Disulfide bonds link cysteine 31-cysteine 79, cysteine 35-cysteine 56, cysteine 42-cysteine 61, and cysteine 46-cysteine 63. Glycine 80 is modified (glycine amide).

It belongs to the long (4 C-C) scorpion toxin superfamily. Sodium channel inhibitor family. Beta subfamily. Expressed by the venom gland.

The protein localises to the secreted. Depressant insect toxins cause a transient contraction paralysis followed by a slow flaccid paralysis. They bind voltage-independently to sodium channels (Nav) and block action potentials, primarily by depolarizing the axonal membrane and suppressing the sodium current. The chain is Insect toxin 2-13 from Leiurus hebraeus (Hebrew deathstalker scorpion).